Here is a 198-residue protein sequence, read N- to C-terminus: MIIVIITVMVSFLCGSIPTGYLITKKLSGIDVRTKGSGNIGSTNVKRVAGTKISMITQVMDILKGIIPVLLCMLIASKIKLPISTSMYLSIIVIAVILGHDYTPFLGFNGGKGVNTTVGAFFLLAPAAVLAGAVVYFVLRLFTKIVSIKSIAVGITMPIACIALRLPIEITVCAIIACGLLILRHKDNLIRLVNNEEK.

The next 5 membrane-spanning stretches (helical) occupy residues 2-22 (IIVIITVMVSFLCGSIPTGYL), 55-75 (MITQVMDILKGIIPVLLCMLI), 88-108 (YLSIIVIAVILGHDYTPFLGF), 118-138 (VGAFFLLAPAAVLAGAVVYFV), and 162-182 (IALRLPIEITVCAIIACGLLI).

It belongs to the PlsY family. As to quaternary structure, probably interacts with PlsX.

Its subcellular location is the cell membrane. It carries out the reaction an acyl phosphate + sn-glycerol 3-phosphate = a 1-acyl-sn-glycero-3-phosphate + phosphate. The protein operates within lipid metabolism; phospholipid metabolism. In terms of biological role, catalyzes the transfer of an acyl group from acyl-phosphate (acyl-PO(4)) to glycerol-3-phosphate (G3P) to form lysophosphatidic acid (LPA). This enzyme utilizes acyl-phosphate as fatty acyl donor, but not acyl-CoA or acyl-ACP. The protein is Glycerol-3-phosphate acyltransferase of Clostridium acetobutylicum (strain ATCC 824 / DSM 792 / JCM 1419 / IAM 19013 / LMG 5710 / NBRC 13948 / NRRL B-527 / VKM B-1787 / 2291 / W).